The following is a 342-amino-acid chain: Cyclin pch1 (342 aa).

Positions 261–342 are disordered; the sequence is LPIDQKNGSH…TDKEMETEAS (82 aa). The span at 278–314 shows a compositional bias: polar residues; sequence TPSSLASVSTQATPQHQNSSGRTDSFHSLNTETPSKS. At T300 the chain carries Phosphothreonine. Residue S302 is modified to Phosphoserine. The span at 329 to 342 shows a compositional bias: basic and acidic residues; it reads KSSDTDKEMETEAS.

It belongs to the cyclin family. Cyclin C subfamily. In terms of assembly, interacts with cdc2 protein kinase and with the N-terminal domain of cdk9.

Its subcellular location is the nucleus. Its function is as follows. Essential for progression through the whole cell cycle. In Schizosaccharomyces pombe (strain 972 / ATCC 24843) (Fission yeast), this protein is Cyclin pch1 (pch1).